Reading from the N-terminus, the 272-residue chain is Putative pyruvate, phosphate dikinase regulatory protein (272 aa).

153–160 (GVSRTSKT) is a binding site for ADP.

It belongs to the pyruvate, phosphate/water dikinase regulatory protein family. PDRP subfamily.

It carries out the reaction N(tele)-phospho-L-histidyl/L-threonyl-[pyruvate, phosphate dikinase] + ADP = N(tele)-phospho-L-histidyl/O-phospho-L-threonyl-[pyruvate, phosphate dikinase] + AMP + H(+). The catalysed reaction is N(tele)-phospho-L-histidyl/O-phospho-L-threonyl-[pyruvate, phosphate dikinase] + phosphate + H(+) = N(tele)-phospho-L-histidyl/L-threonyl-[pyruvate, phosphate dikinase] + diphosphate. Functionally, bifunctional serine/threonine kinase and phosphorylase involved in the regulation of the pyruvate, phosphate dikinase (PPDK) by catalyzing its phosphorylation/dephosphorylation. This Streptococcus sanguinis (strain SK36) protein is Putative pyruvate, phosphate dikinase regulatory protein.